The primary structure comprises 215 residues: Ceramide-1-phosphate transfer protein (215 aa).

Positions 57, 61, 107, 111, and 151 each coordinate an N-acylsphingoid base 1-phosphate.

Belongs to the GLTP family.

The protein resides in the cytoplasm. It localises to the cytosol. The protein localises to the golgi apparatus. It is found in the trans-Golgi network membrane. Its subcellular location is the cell membrane. The protein resides in the endosome membrane. It localises to the nucleus outer membrane. It carries out the reaction N-(hexadecanoyl)-sphing-4-enine-1-phosphate(in) = N-(hexadecanoyl)-sphing-4-enine-1-phosphate(out). The enzyme catalyses N-(9Z-octadecenoyl)-sphing-4-enine-1-phosphate(in) = N-(9Z-octadecenoyl)-sphing-4-enine-1-phosphate(out). Functionally, mediates the intracellular transfer of ceramide-1-phosphate (C1P) between organelle membranes and the cell membrane. Required for normal structure of the Golgi stacks. Can bind phosphoceramides with a variety of aliphatic chains, but has a preference for lipids with saturated C16:0 or monounsaturated C18:1 aliphatic chains, and is inefficient with phosphoceramides containing lignoceryl (C24:0). Plays a role in the regulation of the cellular levels of ceramide-1-phosphate, and thereby contributes to the regulation of phospholipase PLA2G4A activity and the release of arachidonic acid. Has no activity with galactosylceramide, lactosylceramide, sphingomyelin, phosphatidylcholine, phosphatidic acid and ceramide. C1P transfer is stimulated by phosphatidylserine in C1P source vesicles. Regulates autophagy and pyroptosis, but not apoptosis. This chain is Ceramide-1-phosphate transfer protein (cptp), found in Xenopus laevis (African clawed frog).